The sequence spans 901 residues: Protein translocase subunit SecA (901 aa).

Residues glutamine 87, 105 to 109 (GEGKT), and aspartate 512 contribute to the ATP site. The interval 852–901 (AQMQQLSHQSDDEAAAQDLAAQTGERKVGRNDPCPCGSGKKYKQCHGRLS) is disordered. 4 residues coordinate Zn(2+): cysteine 885, cysteine 887, cysteine 896, and histidine 897. Residues 891 to 901 (KKYKQCHGRLS) show a composition bias toward basic residues.

It belongs to the SecA family. Monomer and homodimer. Part of the essential Sec protein translocation apparatus which comprises SecA, SecYEG and auxiliary proteins SecDF-YajC and YidC. It depends on Zn(2+) as a cofactor.

It is found in the cell inner membrane. Its subcellular location is the cytoplasm. The catalysed reaction is ATP + H2O + cellular proteinSide 1 = ADP + phosphate + cellular proteinSide 2.. Its function is as follows. Part of the Sec protein translocase complex. Interacts with the SecYEG preprotein conducting channel. Has a central role in coupling the hydrolysis of ATP to the transfer of proteins into and across the cell membrane, serving both as a receptor for the preprotein-SecB complex and as an ATP-driven molecular motor driving the stepwise translocation of polypeptide chains across the membrane. The sequence is that of Protein translocase subunit SecA from Klebsiella pneumoniae subsp. pneumoniae (strain ATCC 700721 / MGH 78578).